The following is a 49-amino-acid chain: Large ribosomal subunit protein bL33 (49 aa).

The protein belongs to the bacterial ribosomal protein bL33 family.

The sequence is that of Large ribosomal subunit protein bL33 from Carboxydothermus hydrogenoformans (strain ATCC BAA-161 / DSM 6008 / Z-2901).